A 273-amino-acid chain; its full sequence is Undecaprenyl-diphosphatase (273 aa).

The next 7 membrane-spanning stretches (helical) occupy residues Leu54–Ile74, Leu90–His110, Leu116–Ala136, Gln156–Thr178, Tyr190–Leu210, Ala222–Ile242, and Ile252–Phe272.

This sequence belongs to the UppP family.

The protein resides in the cell inner membrane. The enzyme catalyses di-trans,octa-cis-undecaprenyl diphosphate + H2O = di-trans,octa-cis-undecaprenyl phosphate + phosphate + H(+). Catalyzes the dephosphorylation of undecaprenyl diphosphate (UPP). Confers resistance to bacitracin. This Salmonella paratyphi A (strain ATCC 9150 / SARB42) protein is Undecaprenyl-diphosphatase.